Reading from the N-terminus, the 440-residue chain is Probable pectate lyase 10 (440 aa).

Residues 1–28 (MVIFSRSFLALSTTLIILALCINSSTMA) form the signal peptide. The disordered stretch occupies residues 32–56 (EDLNSHSSSNSSTANKLPNDDGAWN). Asn41 and Asn76 each carry an N-linked (GlcNAc...) asparagine glycan. Residues Asp238, Asp262, and Asp266 each contribute to the Ca(2+) site. Arg318 is a catalytic residue.

The protein belongs to the polysaccharide lyase 1 family. Requires Ca(2+) as cofactor.

It carries out the reaction Eliminative cleavage of (1-&gt;4)-alpha-D-galacturonan to give oligosaccharides with 4-deoxy-alpha-D-galact-4-enuronosyl groups at their non-reducing ends.. It participates in glycan metabolism; pectin degradation; 2-dehydro-3-deoxy-D-gluconate from pectin: step 2/5. In Arabidopsis thaliana (Mouse-ear cress), this protein is Probable pectate lyase 10.